The following is a 421-amino-acid chain: MTRRVVITGVGVRAPGGSGTKEFWDLLTAGRTATRPISFFDASPFRSRIAGEIDFDAVAEGFSPREVRRMDRATQFAVACTRDALADSGLDTGALDPSRIGVALGSAVASATSLENEYLVMSDSGREWLVDPAHLSPMMFDYLSPGVMPAEVAWAAGAEGPVTMVSDGCTSGLDSVGYAVQGTREGSADVVVAGAADTPVSPIVVACFDAIKATTPRNDDPAHASRPFDGTRNGFVLAEGAAMFVLEEYEAAQRRGAHIYAEVGGYATRSQAYHMTGLKKDGREMAESIRAALDEARLDRTAVDYVNAHGSGTKQNDRHETAAFKRSLGEHAYAVPVSSIKSMGGHSLGAIGSIEIAASVLAIEHNVVPPTANLHTPDPECDLDYVPLTAREQRVDTVLTVGSGFGGFQSAMVLHRPEEAA.

The region spanning 2-416 (TRRVVITGVG…GFQSAMVLHR (415 aa)) is the Ketosynthase family 3 (KS3) domain. Active-site for beta-ketoacyl synthase activity residues include Cys169, His309, and His346.

Belongs to the thiolase-like superfamily. Beta-ketoacyl-ACP synthases family.

The protein operates within antibiotic biosynthesis; granaticin biosynthesis. This chain is Granaticin polyketide putative beta-ketoacyl synthase 1 (gra-orf1), found in Streptomyces violaceoruber.